Reading from the N-terminus, the 327-residue chain is Zinc transport protein ZntB (327 aa).

Residues 1–273 (MEAIKGSDVN…ARRTYTMSLM (273 aa)) lie on the Cytoplasmic side of the membrane. The chain crosses the membrane as a helical span at residues 274–294 (AMVFLPSTFLTGLFGVNLGGI). Over 295–300 (PGGGWQ) the chain is Periplasmic. Residues 301–321 (FGFSIFCILLVVLIGGVALWL) traverse the membrane as a helical segment. Over 322–327 (YRSKWL) the chain is Cytoplasmic.

Belongs to the CorA metal ion transporter (MIT) (TC 1.A.35) family.

The protein resides in the cell inner membrane. It carries out the reaction Zn(2+)(out) + H(+)(out) = Zn(2+)(in) + H(+)(in). Its function is as follows. Zinc transporter. Acts as a Zn(2+):proton symporter, which likely mediates zinc ion uptake. This chain is Zinc transport protein ZntB, found in Shigella flexneri serotype 5b (strain 8401).